The chain runs to 264 residues: Iodotyrosine deiodinase (264 aa).

Residues 75 to 79 (RRTVR) and 103 to 104 (SG) each bind FMN. 4 residues coordinate 3-iodo-L-tyrosine: A105, E132, Y136, and K157. FMN is bound by residues 212–214 (TST) and R254.

Belongs to the nitroreductase family. It depends on FMN as a cofactor.

The enzyme catalyses 2 iodide + L-tyrosine + 2 NADP(+) = 3,5-diiodo-L-tyrosine + 2 NADPH + H(+). It catalyses the reaction iodide + L-tyrosine + NADP(+) = 3-iodo-L-tyrosine + NADPH. It carries out the reaction 3-iodo-L-tyrosine + iodide + NADP(+) = 3,5-diiodo-L-tyrosine + NADPH + H(+). The catalysed reaction is L-tyrosine + chloride + NADP(+) = 3-chloro-L-tyrosine + NADPH. The enzyme catalyses bromide + L-tyrosine + NADP(+) = 3-bromo-L-tyrosine + NADPH. Catalyzes the dehalogenation of halotyrosines such as 3,5-diiodo-L-tyrosine. Likely to also catalyze the dehalogenation of other halotyrosines such as 3-bromo-L-tyrosine, 3-chloro-L-tyrosine and 3-iodo-L-tyrosine. The chain is Iodotyrosine deiodinase from Nematostella vectensis (Starlet sea anemone).